A 2606-amino-acid chain; its full sequence is MAFQAQTDTGLQLLATASSHQGDCKYGPFAGSQCLSVCVYYLASSFMNNAPVDSREGLDDVLLHGSTLDRLMRTHNFIPMNEFAQLSSVPKVLITHLWSCAIETSPELYGLLSDECVVCAPFIMSLRKALEMNYFEIPQYILYICNGKSGAIIIKNKTYFIFDPHCTSSRDTAAVYASASASSVVAYVGEASREYTACHLYFIPAESSDEPVNEYLLANYGIASALKRSGAYVNLKTLQTHAISESTQPIAPPVPAAPSGMQFFPTQASFPSSQSFVATSTPVPTKALKPTPSHQPSIPGAASLKTALHMATVKRKRIAISPLHSNTESDDSETGKKNTPVKITKPNEADVGEVETFWLDDDISTKQMLSETSSSEKNLPESIFSSSDWDTDSLLSTHESPPATPSLKSGQVNYTSTFSLDNEELGGSNLQLQDKTYKLDSTTFENLPQLLTSLEEHIEKVSKYPHKNDMPVIVDHSVNKCYREAVALYTIDSLLSHVIEQGLISKPEHKSQALNILRYIAIWLNKLSIYTNQVQELINTELYIPYIYQALFATKFDGKLEAMLIEKITKCFQTLHGTSLQDMKNLSKMIQASIKNTPYYDKAVNVQEETENLKSAVSLPYFITTEEELKKIQALAANLWKVIQDHNNSVSHEDSEFHRAVNSVKNFLPIPSDIQPLDYTLSDKADYLGDTVQQLVASITQECQTISNHMLSSMQSNVSFSADIPDFYSLRGKICTTLNNIQTSKDHLGLYNDKLQKARQQLAYLGYEISSITNSQWSTDYTEPVTPIPELGEIQSQLKIFNTNQQNQQMLQNILDEVESMLQAAKSEQTEQGLQKLAMLLPSIEAYLENAGTLLGPEGNAQFDRLRKEITDLIGSVDVMLAYVKNISAHTLATDAQTISNFPTDAKQQRVFQQALTQKVKDLFTQVNASLKTDRPPTFTENDMAALESLAVMSNDSTLSTAAAFYTKITLLLKSKPDCTVPLYDIAHLKSQLATANINSSTKRSLYMLLAQLNKETVSKKGLEQTQAPAPKGPTADTPVTDSKLIQDSQQNDRHQKEKPLKPKKPQAISLPAVKDTTKHLKPSKPQNLSLPVSTNKAPVEESPESSPIESTSPSHSPVSSMESQNGSFSLESSEEELMDTFAVDDHELSDTDHHMDVDKTTTSVAMDDKPSTSPEPPSQSLSAIVQQEERLGEEQAWKKIQIAFKTLDFTDITYSDWVHVTGITQHHDLKVSETFGPTLESLMSPLLQKLKKMTIGAALSLTTYGQAFKWPSIDWMTPYKNNVLFYLSTVRYPSLVDLAEQSRAEIDVLLQLRSSDALLKGTAGTYLESDSRNMLDIVSSIEDAASDYKLNVHTEVEKWTHQVHNIVNTGDSLPPKPDVILPSHLLNPAFEQTIASLNKDFRDYVYTVEKHLLAELSNDFQLLKVLISETENGFQAWEKETANKLLQLISHSLQNAPPEVRQYTVSHTDPLTLFDKLIHDSEVSSKLTYSEASAALHWVESTCAHIATQCQYPAVGAKLQAIIALVAKVKPKLESLVSLENQANNTDDINIIKQAISSLDPKRITGGTSKVQEWTQKVKDLEKLLADTELEASVVQNIQLLRHMALTARSTNLLANLKQKTTSLYEKWVKEHKTGPTSPITGTIKELDLYLTFKLKFIEYYETNQACIFSTFALPASKIDAKDALTPLTPQSPVFDFNTSGPSPPPPINFQQRLEAMCHLNYAPTQPIWLQVFPTVDNLSMDYIPIKNASPLSLQVIFNNFIETYFVQAPQGPQKDTSQYRGSTVLPNVLQAHFGTIATHLINSHWNNILENSTQALQSYTTVHSLHGTAKQNEFMAIIVAVHGLLQSLSTIYLDTPANSSDIPVVLSFRATLEIILWIWPKIIFYFLKMKSFQSGVSFLQIMINRCLINLTSAFVIQHITNSLIMAGVPEPNGYLFCPKYWTQLEPQAYLWGDEKFLQLCSNSQEKARVCFFVCALESINPVVLGQLWRSLKPTFLPDVHTPYDFLKVLVEAAYKPAYDCQVVSKARVDETPPYSYGFPGNSVLRVESKTTKPQGVTTIPISGFEMAAAAILQKFNPVIYLSTKKPVFSNEFTGEIFVVSPLLDCTGNEEPFSSLLTAPLQPVSENTTLASLYTQLEKDIFRSQKLWLQQHLSSPNNLSHLKHPIVLLDSEKKLTGAYSLTNNAPPPQLLNLRFAYDGKGLPNWPMEILQASTLSYSHQQALEDKTKDWIIDIEDLDDSLCIQNMFSAYPPEIHSGPSRSDSEDSEDSLSPTSPTPHLPKAEFTPLPDSPKPPQDPKDKSTPNPPRPTTFPTPLLPCYPLSEAYATLPKPISIKPSARVHFVVPPKSNLAADQLLRDFESLSLQDRPERPKDGPPDINYLVPPHGSYINLQPPNPRMAVIGTLRAADQKSVFTPTRPAGVGSRAKWVSRQLPPHDFVEPVENGDPPGPPGSEERKYSIRQESYQDPTVSLLLRQPPIIEAVRLFPDKSLTAAQMQQAFKQKQLHVCEKSHRKRLLSAPPTIAPNHLSIHEILADRASLVAPRPPFIPIDENLDIEPLFVQFIMEVSIEEAKNVLITFIKKIRQAVTHNAQLLASSIQRLAALYL.

Positions 1 to 235 are deubiquitination activity; it reads MAFQAQTDTG…LKRSGAYVNL (235 aa). Residues 14-225 form the Peptidase C76 domain; sequence LATASSHQGD…LLANYGIASA (212 aa). Catalysis depends on residues cysteine 34, aspartate 163, and histidine 165. Disordered regions lie at residues 318 to 349, 390 to 411, 1020 to 1135, 2253 to 2316, and 2434 to 2458; these read IAIS…PNEA, DTDS…KSGQ, KKGL…ESSE, PEIH…PTPL, and PPHD…ERKY. Polar residues predominate over residues 1038–1050; it reads TPVTDSKLIQDSQ. Basic and acidic residues predominate over residues 1051 to 1061; sequence QNDRHQKEKPL. Polar residues predominate over residues 1085–1097; that stretch reads KPQNLSLPVSTNK. Positions 1105 to 1132 are enriched in low complexity; sequence ESSPIESTSPSHSPVSSMESQNGSFSLE. The span at 2304-2316 shows a compositional bias: pro residues; the sequence is PNPPRPTTFPTPL.

It belongs to the herpesviridae large tegument protein family. Interacts with host CUL1 and CUL4A; these interactions inhibit the E3 ligase activity of cullins. Interacts with inner tegument protein. Interacts with capsid vertex specific component CVC2. Interacts with the major capsid protein/MCP.

It is found in the virion tegument. The protein localises to the host cytoplasm. The protein resides in the host nucleus. It catalyses the reaction Thiol-dependent hydrolysis of ester, thioester, amide, peptide and isopeptide bonds formed by the C-terminal Gly of ubiquitin (a 76-residue protein attached to proteins as an intracellular targeting signal).. Functionally, large tegument protein that plays multiple roles in the viral cycle. During viral entry, remains associated with the capsid while most of the tegument is detached and participates in the capsid transport toward the host nucleus. Plays a role in the routing of the capsid at the nuclear pore complex and subsequent uncoating. Within the host nucleus, acts as a deneddylase and promotes the degradation of nuclear CRLs (cullin-RING ubiquitin ligases) and thereby stabilizes nuclear CRL substrates, while cytoplasmic CRLs remain unaffected. These modifications prevent host cell cycle S-phase progression and create a favorable environment allowing efficient viral genome replication. Participates later in the secondary envelopment of capsids. Indeed, plays a linker role for the association of the outer viral tegument to the capsids together with the inner tegument protein. This is Large tegument protein deneddylase (64) from Connochaetes taurinus (Blue wildebeest).